The primary structure comprises 103 residues: Co-chaperonin GroES (103 aa).

Belongs to the GroES chaperonin family. In terms of assembly, heptamer of 7 subunits arranged in a ring. Interacts with the chaperonin GroEL.

The protein localises to the cytoplasm. Functionally, together with the chaperonin GroEL, plays an essential role in assisting protein folding. The GroEL-GroES system forms a nano-cage that allows encapsulation of the non-native substrate proteins and provides a physical environment optimized to promote and accelerate protein folding. GroES binds to the apical surface of the GroEL ring, thereby capping the opening of the GroEL channel. The protein is Co-chaperonin GroES of Synechococcus sp. (strain JA-2-3B'a(2-13)) (Cyanobacteria bacterium Yellowstone B-Prime).